A 478-amino-acid polypeptide reads, in one-letter code: Proline--tRNA ligase (478 aa).

Belongs to the class-II aminoacyl-tRNA synthetase family. ProS type 3 subfamily. Homodimer.

It is found in the cytoplasm. The enzyme catalyses tRNA(Pro) + L-proline + ATP = L-prolyl-tRNA(Pro) + AMP + diphosphate. Its function is as follows. Catalyzes the attachment of proline to tRNA(Pro) in a two-step reaction: proline is first activated by ATP to form Pro-AMP and then transferred to the acceptor end of tRNA(Pro). The chain is Proline--tRNA ligase from Clostridium botulinum (strain Langeland / NCTC 10281 / Type F).